We begin with the raw amino-acid sequence, 227 residues long: Guanylate kinase (227 aa).

Residues G21–A199 enclose the Guanylate kinase-like domain. Residue A28 to S35 coordinates ATP.

It belongs to the guanylate kinase family.

It is found in the cytoplasm. The enzyme catalyses GMP + ATP = GDP + ADP. Essential for recycling GMP and indirectly, cGMP. This Burkholderia orbicola (strain AU 1054) protein is Guanylate kinase.